A 137-amino-acid chain; its full sequence is Acidic phospholipase A2 1 (137 aa).

The first 11 residues, 1-11 (LVAVCVSLLGA), serve as a signal peptide directing secretion. The propeptide occupies 12–19 (ANIPPQPL). Intrachain disulfides connect Cys30–Cys89, Cys44–Cys136, Cys46–Cys62, Cys61–Cys117, Cys68–Cys110, Cys78–Cys103, and Cys96–Cys108. The Ca(2+) site is built by Tyr45, Gly47, and Gly49. Gly49 and His65 together coordinate tridecanoate. His65 is a catalytic residue. Asp66 serves as a coordination point for Ca(2+). Residue Asp111 is part of the active site.

In terms of assembly, monomer. The cofactor is Ca(2+). As to expression, expressed by the venom gland.

It is found in the secreted. It catalyses the reaction a 1,2-diacyl-sn-glycero-3-phosphocholine + H2O = a 1-acyl-sn-glycero-3-phosphocholine + a fatty acid + H(+). In terms of biological role, snake venom phospholipase A2 (PLA2) that shows anticoagulant and neurotoxic activities. PLA2 catalyzes the calcium-dependent hydrolysis of the 2-acyl groups in 3-sn-phosphoglycerides. The polypeptide is Acidic phospholipase A2 1 (Bungarus caeruleus (Indian krait)).